A 325-amino-acid polypeptide reads, in one-letter code: UPF0285 protein Mbar_A0208 (325 aa).

Belongs to the UPF0285 family.

The protein is UPF0285 protein Mbar_A0208 of Methanosarcina barkeri (strain Fusaro / DSM 804).